A 340-amino-acid chain; its full sequence is Nucleoid-associated protein PSPA7_4451 (340 aa).

It belongs to the YejK family.

It localises to the cytoplasm. The protein localises to the nucleoid. This is Nucleoid-associated protein PSPA7_4451 from Pseudomonas paraeruginosa (strain DSM 24068 / PA7) (Pseudomonas aeruginosa (strain PA7)).